The following is a 592-amino-acid chain: Putative esterase (592 aa).

Residues Leu12–Ile32 form a helical membrane-spanning segment. Residues Asn68, Asn83, Asn95, Asn447, and Asn510 are each glycosylated (N-linked (GlcNAc...) asparagine; by host). His513 (charge relay system) is an active-site residue. The N-linked (GlcNAc...) asparagine; by host glycan is linked to Asn528.

Belongs to the type-B carboxylesterase/lipase family.

The protein resides in the membrane. It catalyses the reaction a carboxylic ester + H2O = an alcohol + a carboxylate + H(+). The polypeptide is Putative esterase (Spodoptera frugiperda (Fall armyworm)).